A 285-amino-acid polypeptide reads, in one-letter code: CBY1-interacting BAR domain-containing protein 1-B (285 aa).

A mitochondrion-targeting transit peptide spans 1-48 (MSQTPEARTRDNQTRQIQESVNNVEKHFGELCQIFAGYVRKTARLRDK). The tract at residues 11–221 (DNQTRQIQES…DIDEEEDLEV (211 aa)) is BAR-like. Positions 142–184 (RQIISQAETELQRATMDAARISQQLEETIDNFEKQKIKDIKKL) form a coiled coil. Over residues 241–261 (NSRSGSTSRAPSVISQPPGNR) the composition is skewed to polar residues. Residues 241–285 (NSRSGSTSRAPSVISQPPGNRQKNRMEDDEDGEDDNDENSTEDEN) are disordered. Over residues 267–285 (EDDEDGEDDNDENSTEDEN) the composition is skewed to acidic residues.

Belongs to the CIBAR family.

It localises to the cytoplasm. It is found in the cytoskeleton. The protein resides in the microtubule organizing center. The protein localises to the centrosome. Its subcellular location is the centriole. It localises to the cell projection. It is found in the cilium. The protein resides in the nucleus. The protein localises to the mitochondrion inner membrane. Its subcellular location is the flagellum. Plays a critical role in regulating mitochondrial ultrastructure and function by maintaining the integrity of mitochondrial morphology, particularly the organization of cristae. Plays a crucial role in ciliogenesis. Plays a key role in the correct positioning of the annulus, a septin-based ring structure in the sperm flagellum, serving both as a physical barrier and a membrane diffusion barrier that separates the midpiece (MP) from the principal piece (PP). The sequence is that of CBY1-interacting BAR domain-containing protein 1-B from Xenopus laevis (African clawed frog).